The following is a 492-amino-acid chain: E1B 55 kDa protein (492 aa).

The tract at residues 22–112 (ENMEGSQDED…ERNPSGNNSR (91 aa)) is disordered. Positions 34-44 (RLLASAASGSS) are enriched in low complexity. A phosphoserine mark is found at S486 and S487. T491 is modified (phosphothreonine).

This sequence belongs to the adenoviridae E1B 55 kDa protein family. As to quaternary structure, interacts with host PML-4 and PML-5; this interaction promotes efficient subnuclear targeting of E1B-55K to PML nuclear bodies. Interacts with E4-ORF3 protein. Interacts with E4-ORF6 protein.

It is found in the host nucleus. Its subcellular location is the host cytoplasm. Its function is as follows. Plays a major role to prevent cellular inhibition of viral genome replication. Assembles an SCF-like E3 ubiquitin ligase complex based on the cellular proteins ELOB, ELOC, CUL5 and RBX1, in cooperation with viral E4orf6. This viral RING-type ligase ubiquitinates cellular substrates and targets them to proteasomal degradation: TP53/p53, LIG4, MRE11-RAD50-NBS1 (MRN) complex, ITGA3, DAXX and BLM. E1B-55K probably acts as the substrate-specific adapter of the SCF-like E3 ubiquitin ligase complex. Degradation of host TP53/p53 activity is essential for preventing E1A-induced TP53 accumulation that would otherwise lead to cell apoptosis and growth arrest. E1B-55K also inactivates TP53 transcription-factor activity by binding its transactivation domain. E1B-55K also functions as a SUMO1 E3 ligase for TP53 which causes the latter to be sequestered in promyelocytic leukemia (PML) nuclear bodies thereby contributing to maximal inhibition of TP53 function. The polypeptide is E1B 55 kDa protein (Human adenovirus B serotype 7 (HAdV-7)).